The primary structure comprises 83 residues: Short neurotoxin OKI-01/OKI-19 (83 aa).

A signal peptide spans 1–21 (MKTLLLTLVVVTIVCLDLGYT). 4 cysteine pairs are disulfide-bonded: C24–C45, C38–C62, C64–C75, and C76–C81.

This sequence belongs to the three-finger toxin family. Short-chain subfamily. Type I alpha-neurotoxin sub-subfamily. In terms of tissue distribution, expressed by the venom gland.

The protein localises to the secreted. In terms of biological role, binds to muscle nicotinic acetylcholine receptor (nAChR) and inhibit acetylcholine from binding to the receptor, thereby impairing neuromuscular transmission. This Laticauda laticaudata (Blue-ringed sea krait) protein is Short neurotoxin OKI-01/OKI-19.